The chain runs to 511 residues: MSKVARSSSESDVQLWETEEDDMTEGDLGYGLGRKPGGIYEIEFSHRSRKRSDGKNFSPPPFPRKGEERNEASFQYSKHKSQQDTFPQVSRISNYRRQSSTVDSNSELSNEELRQCLNETLEEVEMLKTELEASQRQLRGKEEALKILQSMAILGKATSHTQAVLQKTMEQNRSLEKEINALQWEIEFDHNRFKNIEESWIQKYDRLNCENAVLKENLKVKTEEIKMLKSDNAVLNQRYLEALAMLDIKQQKMAQENMCCDKSGFAEASGLELAVLGACLCHGPGGNPCSCARMAASTRKLLLQLKQELEILQKSKEEAYVMADAFRIAFEQQLMRKNDQALQLTQMDKMHKKATKWMNWKHLKEDGFPSPRSKKTFGQRLLGMLPSENSSKRMEDQDSPQEVLKMLIDLLNDKEEALAHQRKVSYMLARALEDKDTASNENKEKNPIKENFPFNNPWRKTSEFSVLGDPIHSSVCILNSVGCICSIQHSQIDPNYRTLKRSHSLPSSIIF.

Polar residues predominate over residues 1–12 (MSKVARSSSESD). The disordered stretch occupies residues 1–110 (MSKVARSSSE…TVDSNSELSN (110 aa)). A compositionally biased stretch (basic and acidic residues) spans 43–54 (EFSHRSRKRSDG). Positions 83 to 108 (QDTFPQVSRISNYRRQSSTVDSNSEL) are enriched in polar residues. Coiled-coil stretches lie at residues 105–243 (NSEL…LEAL) and 293–325 (RMAA…MADA). The residue at position 504 (serine 504) is a Phosphoserine.

Its subcellular location is the cytoplasm. Its function is as follows. May be involved in the regulation of cell migration. This chain is Coiled-coil domain-containing protein 125 (CCDC125), found in Homo sapiens (Human).